An 89-amino-acid chain; its full sequence is Small ribosomal subunit protein uS15 (89 aa).

It belongs to the universal ribosomal protein uS15 family. Part of the 30S ribosomal subunit. Forms a bridge to the 50S subunit in the 70S ribosome, contacting the 23S rRNA.

One of the primary rRNA binding proteins, it binds directly to 16S rRNA where it helps nucleate assembly of the platform of the 30S subunit by binding and bridging several RNA helices of the 16S rRNA. Functionally, forms an intersubunit bridge (bridge B4) with the 23S rRNA of the 50S subunit in the ribosome. The protein is Small ribosomal subunit protein uS15 of Sodalis glossinidius (strain morsitans).